The following is a 656-amino-acid chain: Macrolide export ATP-binding/permease protein MacB (656 aa).

Residues 20-258 (IELAGITRSF…EPDFAPHVDR (239 aa)) form the ABC transporter domain. Residue 56 to 63 (GASGSGKS) coordinates ATP. Transmembrane regions (helical) follow at residues 284-304 (ALTL…LAIG), 531-551 (LTIL…IGVM), 591-611 (ALGG…IALF), and 619-639 (LLPV…FGYL).

It belongs to the ABC transporter superfamily. Macrolide exporter (TC 3.A.1.122) family. In terms of assembly, homodimer.

Its subcellular location is the cell inner membrane. Its function is as follows. Non-canonical ABC transporter that contains transmembrane domains (TMD), which form a pore in the inner membrane, and an ATP-binding domain (NBD), which is responsible for energy generation. Confers resistance against macrolides. This chain is Macrolide export ATP-binding/permease protein MacB, found in Azoarcus sp. (strain BH72).